The sequence spans 196 residues: Glycerol-3-phosphate acyltransferase (196 aa).

Transmembrane regions (helical) follow at residues 5-25 (VYLL…IIFC), 53-73 (FSAL…VLLA), 80-100 (PSEI…PLFF), 107-127 (GVAT…AAGL), 130-150 (WLIV…TALI), and 153-173 (FYIW…CCLL).

This sequence belongs to the PlsY family. As to quaternary structure, probably interacts with PlsX.

The protein resides in the cell inner membrane. It carries out the reaction an acyl phosphate + sn-glycerol 3-phosphate = a 1-acyl-sn-glycero-3-phosphate + phosphate. It functions in the pathway lipid metabolism; phospholipid metabolism. Catalyzes the transfer of an acyl group from acyl-phosphate (acyl-PO(4)) to glycerol-3-phosphate (G3P) to form lysophosphatidic acid (LPA). This enzyme utilizes acyl-phosphate as fatty acyl donor, but not acyl-CoA or acyl-ACP. This Actinobacillus pleuropneumoniae serotype 7 (strain AP76) protein is Glycerol-3-phosphate acyltransferase.